Consider the following 186-residue polypeptide: Ribosome-recycling factor (186 aa).

The protein belongs to the RRF family.

The protein localises to the cytoplasm. Its function is as follows. Responsible for the release of ribosomes from messenger RNA at the termination of protein biosynthesis. May increase the efficiency of translation by recycling ribosomes from one round of translation to another. This is Ribosome-recycling factor from Bacteroides fragilis (strain ATCC 25285 / DSM 2151 / CCUG 4856 / JCM 11019 / LMG 10263 / NCTC 9343 / Onslow / VPI 2553 / EN-2).